Here is a 231-residue protein sequence, read N- to C-terminus: Orotidine 5'-phosphate decarboxylase (231 aa).

Substrate is bound by residues Asp-11, Lys-33, 60–69, Thr-120, Arg-181, Gln-190, Gly-210, and Arg-211; that span reads DLKFHDIPNT. The Proton donor role is filled by Lys-62.

The protein belongs to the OMP decarboxylase family. Type 1 subfamily. As to quaternary structure, homodimer.

It carries out the reaction orotidine 5'-phosphate + H(+) = UMP + CO2. Its pathway is pyrimidine metabolism; UMP biosynthesis via de novo pathway; UMP from orotate: step 2/2. Functionally, catalyzes the decarboxylation of orotidine 5'-monophosphate (OMP) to uridine 5'-monophosphate (UMP). The sequence is that of Orotidine 5'-phosphate decarboxylase from Photobacterium profundum (strain SS9).